Here is a 1146-residue protein sequence, read N- to C-terminus: Cell division cycle and apoptosis regulator protein 1 (1146 aa).

The segment at 1–246 (MAQFGGQKNP…AQPQPQSLLQ (246 aa)) is interaction with AR. An interaction with GATA2 region spans residues 200-657 (QRIQTLPNQN…RALSSKGLKS (458 aa)). The disordered stretch occupies residues 282-351 (IVSQPQPARR…RRERERSPRR (70 aa)). Basic and acidic residues-rich tracts occupy residues 290 to 331 (RRLD…ERSP) and 338 to 349 (ERSPRRERERSP). Serine 453 carries the post-translational modification Phosphoserine. The stretch at 591–615 (KQQLVEKLQGERKKADGEQDEEEKD) forms a coiled coil. Residues 599 to 635 (QGERKKADGEQDEEEKDDGEVKEIATPTHWSKLDPKA) are disordered. Residues 608–618 (EQDEEEKDDGE) show a composition bias toward acidic residues. Phosphothreonine is present on threonine 624. Positions 633–667 (PKAMKVNDLRKELESRALSSKGLKSQLIARLTKQL) constitute an SAP domain. Lysine 634 is covalently cross-linked (Glycyl lysine isopeptide (Lys-Gly) (interchain with G-Cter in ubiquitin)). The interval 640 to 1146 (DLRKELESRA…EKSKENGSGV (507 aa)) is interaction with GATA1. Threonine 664 carries the post-translational modification Phosphothreonine. 4 stretches are compositionally biased toward basic and acidic residues: residues 671–684 (EQKE…KSEK), 691–716 (DKKS…RQER), 793–814 (KEDK…KKEE), and 829–852 (SGDD…KDDS). Disordered stretches follow at residues 671–716 (EQKE…RQER) and 793–912 (KEDK…KEKP). Serine 682 and serine 694 each carry phosphoserine. Residues 853 to 884 (KDDDETEEDNNQDEYDPMEAEEAEDEDDDREE) show a composition bias toward acidic residues. Phosphothreonine is present on threonine 858. Residues 885-912 (EEVKRDDKRDVSRYCKDRPAKDKEKEKP) show a composition bias toward basic and acidic residues. A Glycyl lysine isopeptide (Lys-Gly) (interchain with G-Cter in SUMO1); alternate cross-link involves residue lysine 1008. Residue lysine 1008 forms a Glycyl lysine isopeptide (Lys-Gly) (interchain with G-Cter in SUMO2); alternate linkage. Positions 1029–1110 (DVGSLLQKLE…LQFENQLNKT (82 aa)) form a coiled coil. Glycyl lysine isopeptide (Lys-Gly) (interchain with G-Cter in SUMO2) cross-links involve residues lysine 1063 and lysine 1131.

As to quaternary structure, directly interacts with ESR1, NR3C1 and p53/TP53. Interacts (via N-terminus) with CALCOCO1. Interacts with MED1 and GATA1. Interacts with AR and GATA2.

The protein resides in the cytoplasm. It is found in the perinuclear region. Its function is as follows. Associates with components of the Mediator and p160 coactivator complexes that play a role as intermediaries transducing regulatory signals from upstream transcriptional activator proteins to basal transcription machinery at the core promoter. Recruited to endogenous nuclear receptor target genes in response to the appropriate hormone. Also functions as a p53 coactivator. May thus play an important role in transcriptional regulation. May be involved in apoptosis signaling in the presence of the retinoid CD437. Apoptosis induction involves sequestration of 14-3-3 protein(s) and mediated altered expression of multiple cell cycle regulatory genes including MYC, CCNB1 and CDKN1A. Plays a role in cell cycle progression and/or cell proliferation. In association with CALCOCO1 enhances GATA1- and MED1-mediated transcriptional activation from the gamma-globin promoter during erythroid differentiation of K562 erythroleukemia cells. Can act as a both a coactivator and corepressor of AR-mediated transcription. Contributes to chromatin looping and AR transcription complex assembly by stabilizing AR-GATA2 association on chromatin and facilitating MED1 and RNA polymerase II recruitment to AR-binding sites. May play an important role in the growth and tumorigenesis of prostate cancer cells. The protein is Cell division cycle and apoptosis regulator protein 1 (Ccar1) of Mus musculus (Mouse).